A 205-amino-acid chain; its full sequence is Protein-L-isoaspartate O-methyltransferase (205 aa).

The active site involves Ser-56.

Belongs to the methyltransferase superfamily. L-isoaspartyl/D-aspartyl protein methyltransferase family.

It localises to the cytoplasm. The enzyme catalyses [protein]-L-isoaspartate + S-adenosyl-L-methionine = [protein]-L-isoaspartate alpha-methyl ester + S-adenosyl-L-homocysteine. Functionally, catalyzes the methyl esterification of L-isoaspartyl residues in peptides and proteins that result from spontaneous decomposition of normal L-aspartyl and L-asparaginyl residues. It plays a role in the repair and/or degradation of damaged proteins. The sequence is that of Protein-L-isoaspartate O-methyltransferase from Aeromonas salmonicida (strain A449).